Consider the following 839-residue polypeptide: Probable beta-glucosidase I (839 aa).

A glycan (N-linked (GlcNAc...) asparagine) is linked at Asn197. Residue Asp225 is part of the active site. The PA14 domain occupies 396–556 (DGKTGFKFRV…TQEELISKAV (161 aa)). Residue Asn494 is glycosylated (N-linked (GlcNAc...) asparagine).

Belongs to the glycosyl hydrolase 3 family.

Its subcellular location is the secreted. The enzyme catalyses Hydrolysis of terminal, non-reducing beta-D-glucosyl residues with release of beta-D-glucose.. The protein operates within glycan metabolism; cellulose degradation. Beta-glucosidases are one of a number of cellulolytic enzymes, and catalyze the last step releasing glucose from the inhibitory cellobiose. This is Probable beta-glucosidase I (bglI) from Emericella nidulans (strain FGSC A4 / ATCC 38163 / CBS 112.46 / NRRL 194 / M139) (Aspergillus nidulans).